The primary structure comprises 406 residues: Probable UDP-arabinose 4-epimerase 3 (406 aa).

The Cytoplasmic segment spans residues 1–26 (MIPLNRRASQTRGGMEYFDARRKPHN). Residues 27-44 (VGKVIAALVLTTLCIFIL) form a helical; Signal-anchor for type II membrane protein membrane-spanning segment. Over 45–406 (KQSPGFGGSS…KSHPRGYGSN (362 aa)) the chain is Lumenal. 65–96 (HVLVTGGAGYIGSHASLRLLKDNYRVTIVDNL) serves as a coordination point for NAD(+). The active-site Proton acceptor is Y213.

This sequence belongs to the NAD(P)-dependent epimerase/dehydratase family. NAD(+) is required as a cofactor.

It is found in the golgi apparatus. It localises to the golgi stack membrane. It catalyses the reaction UDP-beta-L-arabinopyranose = UDP-alpha-D-xylose. It participates in nucleotide-sugar biosynthesis; UDP-L-arabinose biosynthesis; UDP-L-arabinose from UDP-alpha-D-xylose: step 1/1. It functions in the pathway cell wall biogenesis; cell wall polysaccharide biosynthesis. This chain is Probable UDP-arabinose 4-epimerase 3 (UEL-3), found in Oryza sativa subsp. japonica (Rice).